A 606-amino-acid polypeptide reads, in one-letter code: NADH-ubiquinone oxidoreductase chain 5 (606 aa).

The next 16 membrane-spanning stretches (helical) occupy residues 1-21 (MNLF…PIMM), 35-55 (YVKN…MVYL), 87-107 (LMFM…SMWY), 114-134 (INQF…LVTA), 140-160 (LFIG…WWFG), 171-191 (AILY…WFLS), 211-233 (FPLM…HPWL), 241-261 (TPVS…FLLV), 272-292 (LIQT…AICA), 301-320 (IIAF…IGLN), 325-347 (AFLH…GSII), 366-386 (LPFT…MPFL), 413-433 (LIAT…ALLG), 457-477 (LLVG…PMTT), 482-502 (MPLH…IIAF), and 582-602 (GLIK…MILF).

This sequence belongs to the complex I subunit 5 family. In terms of assembly, core subunit of respiratory chain NADH dehydrogenase (Complex I) which is composed of 45 different subunits.

Its subcellular location is the mitochondrion inner membrane. It catalyses the reaction a ubiquinone + NADH + 5 H(+)(in) = a ubiquinol + NAD(+) + 4 H(+)(out). Its function is as follows. Core subunit of the mitochondrial membrane respiratory chain NADH dehydrogenase (Complex I) which catalyzes electron transfer from NADH through the respiratory chain, using ubiquinone as an electron acceptor. Essential for the catalytic activity and assembly of complex I. This Balaenoptera physalus (Fin whale) protein is NADH-ubiquinone oxidoreductase chain 5 (MT-ND5).